Consider the following 207-residue polypeptide: Ribonuclease HII (207 aa).

The RNase H type-2 domain occupies 12 to 201 (ALVAGVDEVG…VRELLDVVSI (190 aa)). Positions 18, 19, and 110 each coordinate a divalent metal cation.

The protein belongs to the RNase HII family. The cofactor is Mn(2+). It depends on Mg(2+) as a cofactor.

The protein localises to the cytoplasm. It catalyses the reaction Endonucleolytic cleavage to 5'-phosphomonoester.. Functionally, endonuclease that specifically degrades the RNA of RNA-DNA hybrids. The sequence is that of Ribonuclease HII from Azotobacter vinelandii (strain DJ / ATCC BAA-1303).